Reading from the N-terminus, the 497-residue chain is COP9 signalosome complex subunit 3 (497 aa).

The region spanning 233-408 (QAFDAFERCV…DGSPAYLTFL (176 aa)) is the PCI domain.

This sequence belongs to the CSN3 family. In terms of assembly, component of the COP9 signalosome (CSN) complex.

It is found in the cytoplasm. The protein localises to the nucleus. In terms of biological role, component of the COP9 signalosome (CSN) complex that acts as an regulator of the ubiquitin (Ubl) conjugation pathway by mediating the deneddylation of the cullin subunit of SCF-type E3 ubiquitin-protein ligase complexes. The CSN complex is involved in the regulation of the circadian clock through its control of the stability of the SCF(FWD1) complex. In Neurospora crassa (strain ATCC 24698 / 74-OR23-1A / CBS 708.71 / DSM 1257 / FGSC 987), this protein is COP9 signalosome complex subunit 3 (csn-3).